Reading from the N-terminus, the 464-residue chain is MSRLFQKEDDIVALATPFFSSALCVIRSSGVSAIEKFSTMFSDPSKLLEASGHTIHYGYILDNETKEKLDEVVVCLYRAPKSFTGQDSIEVMAHGSLIGIRRIIDFFLKVGFRMAEPGEFTLRSFLAGKLDLTKAEAINELISAKTRQVHALAVNKLSGSLFDKIDLIKKDILNFLSAISVYLDYETDDNEVVIPVDIILKSKSELERLIDSYDTARKLENGVTLVLAGSVNVGKSSLFNLLLKEDRAIVSSYAGTTRDYIQASFEFDGILFNVFDTAGLRETSDFVEQLGIVRSNSLIKEASLIFYVVDLSGKLTDDDLKFIDAYKEDSRVLFVLNKVDLEQNNQTVEFFNSNDIVSLNTVKISTKTLFGINSLYDRIRSFIAVDYMKTSDYDIVISSTRQAALLKRAYALIIELLSKIEQNISYDMLAFDVYEVVNVLGEITGEVTSDDVLNNMFKNFCLGK.

(6S)-5-formyl-5,6,7,8-tetrahydrofolate is bound by residues Arg-27, Glu-90, and Lys-129. A TrmE-type G domain is found at 222 to 384 (GVTLVLAGSV…LYDRIRSFIA (163 aa)). GTP contacts are provided by residues 232 to 237 (NVGKSS), 251 to 257 (SSYAGTT), and 276 to 279 (DTAG). Position 236 (Ser-236) interacts with Mg(2+). K(+) is bound at residue Ser-251. Thr-257 is a binding site for Mg(2+). Residue Lys-464 participates in (6S)-5-formyl-5,6,7,8-tetrahydrofolate binding.

This sequence belongs to the TRAFAC class TrmE-Era-EngA-EngB-Septin-like GTPase superfamily. TrmE GTPase family. As to quaternary structure, homodimer. Heterotetramer of two MnmE and two MnmG subunits. K(+) serves as cofactor.

The protein localises to the cytoplasm. In terms of biological role, exhibits a very high intrinsic GTPase hydrolysis rate. Involved in the addition of a carboxymethylaminomethyl (cmnm) group at the wobble position (U34) of certain tRNAs, forming tRNA-cmnm(5)s(2)U34. This is tRNA modification GTPase MnmE from Borrelia recurrentis (strain A1).